The sequence spans 166 residues: MKELRIGRVINTHGIAGELKIDFNTDFPEQRFAKNSELLIAGEKLVVQSSRPFKQFWLVKFSDHENINLVEKYKGEDIFINERKEPRLSEGEFLVSQIIGLKVIDEKGNSIGEIADSFHTGANDVWTIKKSNGKEILIPYIDQVVKKVDLQTSTVTIELLEGLDED.

The 74-residue stretch at 90–163 folds into the PRC barrel domain; the sequence is EGEFLVSQII…TVTIELLEGL (74 aa).

The protein belongs to the RimM family. In terms of assembly, binds ribosomal protein uS19.

It is found in the cytoplasm. In terms of biological role, an accessory protein needed during the final step in the assembly of 30S ribosomal subunit, possibly for assembly of the head region. Essential for efficient processing of 16S rRNA. May be needed both before and after RbfA during the maturation of 16S rRNA. It has affinity for free ribosomal 30S subunits but not for 70S ribosomes. This is Ribosome maturation factor RimM from Oenococcus oeni (strain ATCC BAA-331 / PSU-1).